We begin with the raw amino-acid sequence, 173 residues long: HTH-type transcriptional regulator IscR (173 aa).

Residues lysine 2–lysine 131 enclose the HTH rrf2-type domain. The H-T-H motif DNA-binding region spans leucine 28–lysine 51. [2Fe-2S] cluster is bound by residues cysteine 92, cysteine 98, and cysteine 104.

[2Fe-2S] cluster serves as cofactor.

Regulates the transcription of several operons and genes involved in the biogenesis of Fe-S clusters and Fe-S-containing proteins. The protein is HTH-type transcriptional regulator IscR of Vibrio atlanticus (strain LGP32) (Vibrio splendidus (strain Mel32)).